The primary structure comprises 157 residues: Eukaryotic translation initiation factor 5A-1 (157 aa).

Position 52 is a hypusine (Lys-52). A phosphoserine mark is found at Ser-75 and Ser-77. A Phosphothreonine modification is found at Thr-78.

It belongs to the eIF-5A family. Post-translationally, lys-52 undergoes hypusination, a unique post-translational modification that consists in the addition of a butylamino group from spermidine to lysine side chain, leading to the formation of the unusual amino acid hypusine. eIF-5As are the only known proteins to undergo this modification, which is essential for their function.

The protein resides in the cytoplasm. In terms of biological role, translation factor that promotes translation elongation and termination, particularly upon ribosome stalling at specific amino acid sequence contexts. Binds between the exit (E) and peptidyl (P) site of the ribosome and promotes rescue of stalled ribosome: specifically required for efficient translation of polyproline-containing peptides as well as other motifs that stall the ribosome. Acts as a ribosome quality control (RQC) cofactor by joining the RQC complex to facilitate peptidyl transfer during CAT tailing step. This Schizosaccharomyces pombe (strain 972 / ATCC 24843) (Fission yeast) protein is Eukaryotic translation initiation factor 5A-1 (tif51a).